The following is a 129-amino-acid chain: Gas vesicle protein C (129 aa).

Repeats lie at residues 19-51 (VTQL…LHQF), 52-84 (HQNL…LHKF), and 85-117 (HQNL…LQQF). The 3 X 33 AA tandem repeats stretch occupies residues 19–117 (VTQLFRETHE…KAQSQYLQQF (99 aa)).

The protein belongs to the gas vesicle GvpC family.

The protein resides in the gas vesicle. Functionally, confers stability, involved in shaping gas vesicles, hollow, gas filled proteinaceous nanostructures. During planktonic growth they allow positioning of the organism at a favorable depth for light or nutrient acquisition. In terms of biological role, cluster expression in E.coli (gvpA1-gvpA2-gvpC-gvpN-gvpJ-gvpK-gvpF-gvpG-gvpV-gvpW) allows cells to float and produces irregularly shaped gas vesicles. This chain is Gas vesicle protein C, found in Nostoc sp. (strain PCC 7120 / SAG 25.82 / UTEX 2576).